The primary structure comprises 288 residues: Stomatin (288 aa).

Residues 1–22 (MAEKRHTRDSEAQRLPDSFKDS) form a disordered region. At 1–25 (MAEKRHTRDSEAQRLPDSFKDSPSK) the chain is on the cytoplasmic side. The residue at position 10 (Ser10) is a Phosphoserine; by PKA. Ser18 is modified (phosphoserine). The stretch at 26 to 54 (GLGPCGWILVAFSFLFTVITFPISIWMCI) is an intramembrane region. A lipid anchor (S-palmitoyl cysteine) is attached at Cys30. Topologically, residues 55-288 (KIIKEYERAI…IIGAKHSHLG (234 aa)) are cytoplasmic. Residue Cys87 is the site of S-palmitoyl cysteine; partial attachment. A phosphoserine mark is found at Ser161 and Ser244. Residues 265-273 (STIVFPLPI) are required for homooligomerization. Residues 267 to 269 (IVF) form a required for lipid raft association region. The tract at residues 273–287 (IDMLQGIIGAKHSHL) is interaction with LANCL1.

The protein belongs to the band 7/mec-2 family. In terms of assembly, homodimer and higher order homooligomer. The homodimer is banana-shaped. Interacts with ASIC1, ASIC2 and ASIC3. Interacts with LANCL1. Interacts with SLC2A1. Interacts with SLC4A1; this interaction positively regulates SLC4A1 activity. Identified in large complexes with SLC40A1, SLC14A1, SLC29A1 and AQP1. Interacts with STOML1; may redistribute STOM from the plasma membrane to late endosomes. In terms of tissue distribution, detected in erythrocytes (at protein level). Widely expressed.

The protein resides in the cell membrane. Its subcellular location is the cytoplasm. It localises to the cytoskeleton. The protein localises to the membrane raft. It is found in the melanosome. The protein resides in the cytoplasmic vesicle. Functionally, regulates ion channel activity and transmembrane ion transport. Regulates ASIC2 and ASIC3 channel activity. The polypeptide is Stomatin (Homo sapiens (Human)).